The primary structure comprises 510 residues: NAD(P)H-quinone oxidoreductase subunit 2, chloroplastic (510 aa).

The next 12 helical transmembrane spans lie at L24–L44, W59–W79, I99–I119, M124–C144, F149–Y169, Y183–G203, I229–F249, W295–I315, M323–D343, G347–A367, A395–F415, and L418–L438.

The protein belongs to the complex I subunit 2 family. In terms of assembly, NDH is composed of at least 16 different subunits, 5 of which are encoded in the nucleus.

The protein localises to the plastid. The protein resides in the chloroplast thylakoid membrane. It catalyses the reaction a plastoquinone + NADH + (n+1) H(+)(in) = a plastoquinol + NAD(+) + n H(+)(out). The catalysed reaction is a plastoquinone + NADPH + (n+1) H(+)(in) = a plastoquinol + NADP(+) + n H(+)(out). NDH shuttles electrons from NAD(P)H:plastoquinone, via FMN and iron-sulfur (Fe-S) centers, to quinones in the photosynthetic chain and possibly in a chloroplast respiratory chain. The immediate electron acceptor for the enzyme in this species is believed to be plastoquinone. Couples the redox reaction to proton translocation, and thus conserves the redox energy in a proton gradient. The sequence is that of NAD(P)H-quinone oxidoreductase subunit 2, chloroplastic from Phormium tenax (New Zealand flax).